Consider the following 110-residue polypeptide: U1-lycotoxin-Ls1jj (110 aa).

A signal peptide spans 1–20 (MKFVLLFGVLLVTLFSYSSA). Positions 21 to 44 (EMLDDFDQADEDELLSLIEKEEAR) are excised as a propeptide. Intrachain disulfides connect Cys47–Cys62, Cys54–Cys71, Cys61–Cys89, and Cys73–Cys87.

The protein belongs to the neurotoxin 19 (CSTX) family. 03 subfamily. As to expression, expressed by the venom gland.

It localises to the secreted. The chain is U1-lycotoxin-Ls1jj from Lycosa singoriensis (Wolf spider).